Consider the following 653-residue polypeptide: MGKIIGIDLGTTNSCVAIMEGNSVKVIENSEGARTTPSIIAYMEDGEILVGAPAKRQSVTNPKNTLYAVKRLIGRRFEEKEVQKDIGLMPYKIIKADNGDAWVEVRDQKLAPPQISAEVLRKMKKTAEDYLGEPVTEAVITVPAYFNDSQRQATKDAGRIAGLEVKRIINEPTAAALAFGLDKNEKGDRKIAVYDLGGGTFDVSIIEIADVDGEKQFEVLSTNGDTFLGGEDFDQRIIDYIIGEFKKEQGVDLSKDVLALQRLKESAEKAKIELSSSQQTEINLPYITADASGPKHLNLKITRAKLEALVEELIERTIEPCRVAIKDAGVKVGEIDDVILVGGMTRMPKVQEKVKEFFGKDPRRDVNPDEAVAVGAAIQGQVLSGDRKDVLLLDVTPLSLGIETLGGVMTKMINKNTTIPTKHSQVYSTADDNQGAVTIKVFQGEREMAAGNKLLGEFNLEGIPPAPRGTPQIEVSFDIDANGILHVGAKDKATGKENRITIKANSGLSEAEIEKMVKDAEANAEEDHKLRELADARNQGDALVHSTKKALTEYGDKLEAGEKEKIESALKDLEETLKSGSSDKAAIEAKIEVVATASQKMGEKMYADMQAAQGAEAAAAGAAGAGGAGASAGGASQQQDDVVDAEFKEVKKD.

Position 200 is a phosphothreonine; by autocatalysis (T200). The segment at 615 to 653 is disordered; sequence AEAAAAGAAGAGGAGASAGGASQQQDDVVDAEFKEVKKD. Residues 623 to 632 are compositionally biased toward gly residues; it reads AGAGGAGASA.

Belongs to the heat shock protein 70 family.

Functionally, acts as a chaperone. The protein is Chaperone protein DnaK of Paraburkholderia xenovorans (strain LB400).